A 373-amino-acid polypeptide reads, in one-letter code: MKSGRFIGVMSGTSLDGVDVVLAAIDETMVAQQASLTWPIPVHLKKGILDICQGQPLTLSQLGQLDTQLGRLFAQAVNALLAQQRLQPRDIVAIGCHGQTVWHEPTGEAPHTLQIGDNNHIVAHTGITVVGDFRRRDIALGGQGAPLVPAFHHALLGHPTEKRMVLNIGGIANLSLLFPGQAVRGYDTGPGNMLMDAWIWRQCAQPYDKDAAWAKEGQVILPLLQKMLRDPYFAASAPKSTGREYFNYGWLERHLAAFPGADARDVQATLAELTAVSIAQQVLLNGGCERLMVCGGGGRNPLVMARLAALLPGIEVSTTDKAGISGDDMEALAFAWLAWRTLAGLPGNLPSVTGATEASVLGAIYPANPITQS.

ATP is bound at residue 12-19; it reads GTSLDGVD.

It belongs to the anhydro-N-acetylmuramic acid kinase family.

It catalyses the reaction 1,6-anhydro-N-acetyl-beta-muramate + ATP + H2O = N-acetyl-D-muramate 6-phosphate + ADP + H(+). The protein operates within amino-sugar metabolism; 1,6-anhydro-N-acetylmuramate degradation. It participates in cell wall biogenesis; peptidoglycan recycling. Its function is as follows. Catalyzes the specific phosphorylation of 1,6-anhydro-N-acetylmuramic acid (anhMurNAc) with the simultaneous cleavage of the 1,6-anhydro ring, generating MurNAc-6-P. Is required for the utilization of anhMurNAc either imported from the medium or derived from its own cell wall murein, and thus plays a role in cell wall recycling. This is Anhydro-N-acetylmuramic acid kinase from Salmonella dublin (strain CT_02021853).